Consider the following 419-residue polypeptide: Acyl transferase 9 (419 aa).

Residues His161 and Asp362 each act as proton acceptor in the active site.

This sequence belongs to the plant acyltransferase family.

Functionally, involved in the incorporation of ferulate into the cell wall. May act as arabinoxylan feruloyl transferase. This Oryza sativa subsp. japonica (Rice) protein is Acyl transferase 9.